Reading from the N-terminus, the 307-residue chain is MVRTEVEIGRGLTIKNPVMTASGTYGYGTEYKDFIDIDRLGAIVVKGTTLHHREGNAYPRMAETPSGMLNAVGLQNKGVHYFVEHIYPVIKDYRTEMIVNVSGSTLDDYAETSRIINELEHIRAIELNISCPNVKQGGMAYGVTCEGAASVVKAVRRAYDKTLIVKLSPNVTDITEIARAVESEGADAISMVNTFLGMAIDAEKRRPILSTTTGGLSGPCIKPIALRMVWQTAKVVQVPIIGMGGIASAADAIEFLLAGATAVQVGCYNFVDPAAASYIVDGIEDYLRRHGISDVKELIGSLVIEHN.

Residues serine 22 and 46-47 (KG) each bind FMN. Residues lysine 46 and 70–74 (NAVGL) each bind substrate. Positions 100 and 128 each coordinate FMN. Asparagine 128 is a substrate binding site. The active-site Nucleophile is cysteine 131. The FMN site is built by lysine 166 and valine 192. 193 to 194 (NT) is a substrate binding site. FMN-binding positions include glycine 218 and 244 to 245 (GG).

This sequence belongs to the dihydroorotate dehydrogenase family. Type 1 subfamily. In terms of assembly, heterotetramer of 2 PyrK and 2 PyrD type B subunits. The cofactor is FMN.

It localises to the cytoplasm. The enzyme catalyses (S)-dihydroorotate + NAD(+) = orotate + NADH + H(+). Its pathway is pyrimidine metabolism; UMP biosynthesis via de novo pathway; orotate from (S)-dihydroorotate (NAD(+) route): step 1/1. Its function is as follows. Catalyzes the conversion of dihydroorotate to orotate with NAD(+) as electron acceptor. The sequence is that of Dihydroorotate dehydrogenase B (NAD(+)), catalytic subunit (pyrD) from Porphyromonas gingivalis (strain ATCC BAA-308 / W83).